The chain runs to 275 residues: Polyamine aminopropyltransferase 1 (275 aa).

One can recognise a PABS domain in the interval 2–235; it reads ELWFTEKQTK…GLWTFTIGSK (234 aa). S-methyl-5'-thioadenosine is bound at residue Gln31. The spermidine site is built by His62 and Asp86. S-methyl-5'-thioadenosine is bound by residues Glu106 and 137–138; that span reads DG. Catalysis depends on Asp155, which acts as the Proton acceptor. 155 to 158 lines the spermidine pocket; that stretch reads DSTE. S-methyl-5'-thioadenosine is bound at residue Pro162.

This sequence belongs to the spermidine/spermine synthase family. As to quaternary structure, homodimer or homotetramer.

It is found in the cytoplasm. The catalysed reaction is S-adenosyl 3-(methylsulfanyl)propylamine + putrescine = S-methyl-5'-thioadenosine + spermidine + H(+). The protein operates within amine and polyamine biosynthesis; spermidine biosynthesis; spermidine from putrescine: step 1/1. Functionally, catalyzes the irreversible transfer of a propylamine group from the amino donor S-adenosylmethioninamine (decarboxy-AdoMet) to putrescine (1,4-diaminobutane) to yield spermidine. The chain is Polyamine aminopropyltransferase 1 from Bacillus cereus (strain ATCC 14579 / DSM 31 / CCUG 7414 / JCM 2152 / NBRC 15305 / NCIMB 9373 / NCTC 2599 / NRRL B-3711).